Reading from the N-terminus, the 252-residue chain is Fructose-1,6-bisphosphatase/inositol-1-monophosphatase (252 aa).

The Mg(2+) site is built by glutamate 65, aspartate 81, isoleucine 83, and aspartate 84. Substrate is bound by residues 84–86 (DGS), arginine 170, phenylalanine 175, and arginine 194. Residue aspartate 201 coordinates Mg(2+).

This sequence belongs to the inositol monophosphatase superfamily. FBPase class 4 family. Homodimer. Mg(2+) is required as a cofactor.

It catalyses the reaction beta-D-fructose 1,6-bisphosphate + H2O = beta-D-fructose 6-phosphate + phosphate. It carries out the reaction a myo-inositol phosphate + H2O = myo-inositol + phosphate. IMPase activity is inhibited by Ca(2+) and Zn(2+). In contrast to mammalian I-1-P phosphatases, is not inhibited by Li(+) up to 100 mM. In terms of biological role, phosphatase with broad specificity; it can dephosphorylate fructose 1,6-bisphosphate, both D and L isomers of inositol-1-phosphate (I-1-P), 2'-AMP, pNPP, beta-glycerol phosphate, and alpha-D-glucose-1-phosphate. Cannot hydrolyze glucose-6-phosphate, fructose-6-phosphate, NAD(+) or 5'-AMP. May be involved in the biosynthesis of a unique osmolyte, di-myo-inositol 1,1-phosphate. The chain is Fructose-1,6-bisphosphatase/inositol-1-monophosphatase (suhB) from Methanocaldococcus jannaschii (strain ATCC 43067 / DSM 2661 / JAL-1 / JCM 10045 / NBRC 100440) (Methanococcus jannaschii).